Consider the following 210-residue polypeptide: DNA-directed RNA polymerases I, II, and III subunit RPABC1 (210 aa).

N-acetylmethionine is present on Met-1. Residue Lys-81 forms a Glycyl lysine isopeptide (Lys-Gly) (interchain with G-Cter in SUMO2) linkage.

Belongs to the archaeal Rpo5/eukaryotic RPB5 RNA polymerase subunit family. As to quaternary structure, component of the RNA polymerase I (Pol I), RNA polymerase II (Pol II) and RNA polymerase III (Pol III) complexes consisting of at least 13, 12 and 17 subunits, respectively. Pol I complex consists of a ten-subunit catalytic core composed of POLR1A/RPA1, POLR1B/RPA2, POLR1C/RPAC1, POLR1D/RPAC2, POLR1H/RPA12, POLR2E/RPABC1, POLR2F/RPABC2, POLR2H/RPABC3, POLR2K/RPABC4 and POLR2L/RPABC5; a mobile stalk subunit POLR1F/RPA43 protruding from the core and additional subunits homologous to general transcription factors POLR1E/RPA49 and POLR1G/RPA34. Part of Pol I pre-initiation complex (PIC), in which Pol I core assembles with RRN3 and promoter-bound UTBF and SL1/TIF-IB complex. Pol II complex contains a ten-subunit catalytic core composed of POLR2A/RPB1, POLR2B/RPB2, POLR2C/RPB3, POLR2I/RPB9, POLR2J/RPB11, POLR2E/RPABC1, POLR2F/RPABC2, POLR2H/RPABC3, POLR2K/RPABC4 and POLR2L/RPABC5 and a mobile stalk composed of two subunits POLR2D/RPB4 and POLR2G/RPB7. Part of Pol II(G) complex, in which Pol II core associates with an additional subunit POLR2M; unlike conventional Pol II, Pol II(G) functions as a transcriptional repressor. Part of TBP-based Pol II pre-initiation complex (PIC), in which Pol II core assembles with general transcription factors and other specific initiation factors including GTF2E1, GTF2E2, GTF2F1, GTF2F2, TCEA1, ERCC2, ERCC3, GTF2H2, GTF2H3, GTF2H4, GTF2H5, GTF2A1, GTF2A2, GTF2B and TBP; this large multi-subunit PIC complex mediates DNA unwinding and targets Pol II core to the transcription start site where the first phosphodiester bond forms. In Pol II complex, this subunit is present in 2-fold molar excess over the other subunits. Pol III complex consists of a ten-subunit catalytic core composed of POLR3A/RPC1, POLR3B/RPC2, POLR1C/RPAC1, POLR1D/RPAC2, POLR3K/RPC10, POLR2E/RPABC1, POLR2F/RPABC2, POLR2H/RPABC3, POLR2K/RPABC4 and POLR2L/RPABC5; a mobile stalk composed of two subunits POLR3H/RPC8 and CRCP/RPC9, protruding from the core and functioning primarily in transcription initiation; and additional subunits homologous to general transcription factors of the RNA polymerase II machinery, POLR3C/RPC3-POLR3F/RPC6-POLR3G/RPC7 heterotrimer required for transcription initiation and POLR3D/RPC4-POLR3E/RPC5 heterodimer involved in both transcription initiation and termination. Component of the PAQosome complex which is responsible for the biogenesis of several protein complexes and which consists of R2TP complex members RUVBL1, RUVBL2, RPAP3 and PIH1D1, URI complex members PFDN2, PFDN6, PDRG1, UXT and URI1 as well as ASDURF, POLR2E and DNAAF10/WDR92. Interacts with URI1.

The protein resides in the nucleus. It localises to the nucleolus. Functionally, DNA-dependent RNA polymerase catalyzes the transcription of DNA into RNA using the four ribonucleoside triphosphates as substrates. Common component of RNA polymerases I, II and III which synthesize ribosomal RNA precursors, mRNA precursors and many functional non-coding RNAs, and small RNAs, such as 5S rRNA and tRNAs, respectively. Pol II is the central component of the basal RNA polymerase II transcription machinery. Pols are composed of mobile elements that move relative to each other. In Pol II, POLR2E/RPABC1 is part of the lower jaw surrounding the central large cleft and thought to grab the incoming DNA template. Seems to be the major component in this process. This is DNA-directed RNA polymerases I, II, and III subunit RPABC1 (POLR2E) from Pongo abelii (Sumatran orangutan).